The sequence spans 261 residues: Metallo-beta-lactamase fold-containing protein ST1585 (261 aa).

Zn(2+) is bound by residues His58, His60, Asp62, His63, His148, Asp165, and His207.

It belongs to the metallo-beta-lactamase superfamily. In terms of assembly, monomer.

The protein is Metallo-beta-lactamase fold-containing protein ST1585 of Sulfurisphaera tokodaii (strain DSM 16993 / JCM 10545 / NBRC 100140 / 7) (Sulfolobus tokodaii).